The sequence spans 600 residues: MIDLMPKKNTFLLKKKYKEDSNNSVINNLFDFFGKEFCFHQITLTGFPIIWIDKTLLIEVGKFLYHLSQPYIMLYDLHGVDERIRLHREDLPKADFSVFYHLISIERNSDIMIKVPLLENDLILPTFTGLFPNANWYERETWDMFGIIFNNHPNLTRIIMPSTWKGHPLRKNYSARATEYEPFFLNEQKEDLEMEGLKFKPELWGMKRKNDNVEFMFLNLGPNHPSAHGAFRIVLQLDGENIVDCVPDIGYHHRGAEKMAERQSWHSYIPYTDRIEYLGGCVNELPYVLAVEKLANISVPEKAEVIRVMMSELFRINSHLLYISTFIQDVGCMTPVFFAFTDRQKIYDLIEAITGARMHPAWFRIGGVANDLPQGWNILLKEFLDWMPKRLKYYINTALKNSILIHRSKGIAEYNKKEALQWGVTGAGLRATGLNFDVRKWRPYSGYQNYTFEVPVGSGISDCYSRVMIKVEEIYQSLFILKQCLCNMPSGPFKSEDSLTTPPSKECVFQNIETMITHFLQVSWGPVIPENESFQMIEATKGINSYYLISDGGTMSYRTRIRTPSFPHLQQIPSVIRGSLISDLIVYLGSIDFVMSDVDR.

The segment at 1-190 is NADH dehydrogenase I subunit C; that stretch reads MIDLMPKKNT…EPFFLNEQKE (190 aa). An NADH dehydrogenase I subunit D region spans residues 214–600; the sequence is EFMFLNLGPN…IDFVMSDVDR (387 aa).

In the N-terminal section; belongs to the complex I 30 kDa subunit family. The protein in the C-terminal section; belongs to the complex I 49 kDa subunit family. As to quaternary structure, NDH-1 is composed of 13 different subunits. Subunits NuoB, CD, E, F, and G constitute the peripheral sector of the complex.

It localises to the cell membrane. The catalysed reaction is a quinone + NADH + 5 H(+)(in) = a quinol + NAD(+) + 4 H(+)(out). Its function is as follows. NDH-1 shuttles electrons from NADH, via FMN and iron-sulfur (Fe-S) centers, to quinones in the respiratory chain. The immediate electron acceptor for the enzyme in this species is believed to be ubiquinone. Couples the redox reaction to proton translocation (for every two electrons transferred, four hydrogen ions are translocated across the cytoplasmic membrane), and thus conserves the redox energy in a proton gradient. This Buchnera aphidicola subsp. Acyrthosiphon pisum (strain 5A) protein is NADH-quinone oxidoreductase subunit C/D.